The primary structure comprises 396 residues: Alpha-1-antitrypsin (396 aa).

Positions 1 to 2 are cleaved as a signal peptide; the sequence is HV. The disordered stretch occupies residues 1–24; it reads HVEDPQGDAAQKTDTSHHDQEHST. Over residues 14 to 24 the composition is skewed to basic and acidic residues; it reads DTSHHDQEHST. Ser16 is modified (phosphoserine). N-linked (GlcNAc...) asparagine glycosylation is found at Asn48, Asn85, Asn123, and Asn249. The segment at 351–370 is RCL; sequence GAMFLEAIPMSIPPEVKFNK. Phosphoserine is present on Ser361.

Belongs to the serpin family. As to quaternary structure, interacts with CELA2A. Interacts with ERGIC3 and LMAN1/ERGIC53. Interacts with PRSS1/Trypsin. Plasma.

It localises to the secreted. Functionally, inhibitor of serine proteases. Its primary target is elastase, but it also has a moderate affinity for plasmin and thrombin. Inhibits trypsin, chymotrypsin and plasminogen activator. The polypeptide is Alpha-1-antitrypsin (SERPINA1) (Chlorocebus aethiops (Green monkey)).